The following is a 273-amino-acid chain: 5-deoxy-glucuronate isomerase (273 aa).

It belongs to the isomerase IolB family.

The enzyme catalyses 5-deoxy-D-glucuronate = 5-dehydro-2-deoxy-D-gluconate. It functions in the pathway polyol metabolism; myo-inositol degradation into acetyl-CoA; acetyl-CoA from myo-inositol: step 4/7. Its function is as follows. Involved in the isomerization of 5-deoxy-glucuronate (5DG) to 5-dehydro-2-deoxy-D-gluconate (DKG or 2-deoxy-5-keto-D-gluconate). The polypeptide is 5-deoxy-glucuronate isomerase (Listeria monocytogenes serotype 4b (strain CLIP80459)).